The following is a 288-amino-acid chain: Rhox homeobox family member 2 (288 aa).

The segment at 16 to 136 (SPAVDDEKEL…GLEPGNAQQP (121 aa)) is disordered. Residues 39-48 (VKEEEEDAQP) show a composition bias toward acidic residues. Residues 68-80 (GEEKDGGGEEKDG) show a composition bias toward basic and acidic residues. Residues 134–193 (QQPNVHAFTPLQLQELERIFQREQFPSEFLRRRLARSMNVTELAVQIWFENRRAKWRRHQ) constitute a DNA-binding region (homeobox). A Nuclear localization signal motif is present at residues 186–195 (RAKWRRHQRA).

Belongs to the paired-like homeobox family. PEPP subfamily. As to expression, testis. Not detected in epididymis nor placenta. In testis, mainly expressed in germ cells, but also detected in somatic cells such as Sertoli cells, Leydig cells and peritubular cells.

Its subcellular location is the nucleus. Its function is as follows. Transcription factor maybe involved in reproductive processes. Modulates expression of target genes encoding proteins involved in processes relevant to spermatogenesis. The sequence is that of Rhox homeobox family member 2 from Homo sapiens (Human).